The sequence spans 353 residues: uncharacterized protein (353 aa).

Disordered regions lie at residues 1–24 (MSTS…QQSQ), 245–280 (NKSS…EKVP), and 305–353 (AAGK…DLNN). Over residues 9-24 (NKKNNTKQQKYQQQSQ) the composition is skewed to low complexity. The segment covering 254-280 (KSGDKSTVKSTDKQVEKKVEESSEKVP) has biased composition (basic and acidic residues). Residues 321–332 (VTTSTSESTVEV) are compositionally biased toward low complexity. Residues 342-353 (EPDEEVFEDLNN) show a composition bias toward acidic residues.

This is an uncharacterized protein from Acanthamoeba polyphaga mimivirus (APMV).